Consider the following 517-residue polypeptide: ATP synthase subunit alpha 1 (517 aa).

Glycine 174–threonine 181 contributes to the ATP binding site.

It belongs to the ATPase alpha/beta chains family. In terms of assembly, F-type ATPases have 2 components, CF(1) - the catalytic core - and CF(0) - the membrane proton channel. CF(1) has five subunits: alpha(3), beta(3), gamma(1), delta(1), epsilon(1). CF(0) has three main subunits: a(1), b(2) and c(9-12). The alpha and beta chains form an alternating ring which encloses part of the gamma chain. CF(1) is attached to CF(0) by a central stalk formed by the gamma and epsilon chains, while a peripheral stalk is formed by the delta and b chains.

It localises to the cell inner membrane. It catalyses the reaction ATP + H2O + 4 H(+)(in) = ADP + phosphate + 5 H(+)(out). In terms of biological role, produces ATP from ADP in the presence of a proton gradient across the membrane. The alpha chain is a regulatory subunit. This is ATP synthase subunit alpha 1 from Polaromonas naphthalenivorans (strain CJ2).